The primary structure comprises 376 residues: MMTNKVSLSRLKLTDFRNYAAAALVLDERHVVLTGDNGSGKTNLLEAVSFLSPGRGLRRAVLSDVTRVGAEATGFSIFADVDGMDGEVAIGTGIEGDGEVVSRRLRLNGTPVKSVDELTDHLRVLWLTPAMDGLFTGSSSDRRRFLDRLVLSLDPGHGRRASDFEKAMRGRNRLLSEGRFDPVWLDGIEKQMAELGISMAVARYEMLGLLKTLIEGRAGNAAFPSATLSLAGFMDDRLNRPAVDLEDEYGLMLRDGRYRDAAAGRTLDGPHRVDLFVRHAEKNMEAERCSTGEQKALLVGLVLAHAQLTANMTGYAPVLLLDEIAAHLDEGRRAALFDLIHALGGQSFMTGTDAAMFSALGERAQFFNVSHGGITA.

35-42 serves as a coordination point for ATP; the sequence is GDNGSGKT.

Belongs to the RecF family.

The protein localises to the cytoplasm. The RecF protein is involved in DNA metabolism; it is required for DNA replication and normal SOS inducibility. RecF binds preferentially to single-stranded, linear DNA. It also seems to bind ATP. The protein is DNA replication and repair protein RecF of Agrobacterium fabrum (strain C58 / ATCC 33970) (Agrobacterium tumefaciens (strain C58)).